Consider the following 462-residue polypeptide: Spermatogenesis- and oogenesis-specific basic helix-loop-helix-containing protein 2 (462 aa).

The region spanning 200–251 (KASFLHSSKEKLRRERIKFCCEQLRTLLPYVKGRKSDVASVIEATVDYVKQV) is the bHLH domain. Residues 422–462 (PASSRTASSSIFRGFRESDSGHQASQQPTGPSLQPQDSSYF) are disordered. Polar residues predominate over residues 442–462 (GHQASQQPTGPSLQPQDSSYF).

The protein resides in the nucleus. Its function is as follows. Probable transcription factor, which may be involved in spermatogenesis and oogenesis. The sequence is that of Spermatogenesis- and oogenesis-specific basic helix-loop-helix-containing protein 2 (Sohlh2) from Rattus norvegicus (Rat).